The chain runs to 273 residues: Phosphate import ATP-binding protein PstB (273 aa).

Positions 19-258 (LSLQNVTISY…FNDTDKIFNA (240 aa)) constitute an ABC transporter domain. 51 to 58 (GPSGCGKS) is a binding site for ATP.

Belongs to the ABC transporter superfamily. Phosphate importer (TC 3.A.1.7) family. As to quaternary structure, the complex is composed of two ATP-binding proteins (PstB), two transmembrane proteins (PstC and PstA) and a solute-binding protein (PstS).

The protein resides in the cell inner membrane. The enzyme catalyses phosphate(out) + ATP + H2O = ADP + 2 phosphate(in) + H(+). Part of the ABC transporter complex PstSACB involved in phosphate import. Responsible for energy coupling to the transport system. The sequence is that of Phosphate import ATP-binding protein PstB from Synechococcus sp. (strain CC9605).